The chain runs to 419 residues: Serine hydroxymethyltransferase (419 aa).

Residues Leu-120 and 124–126 each bind (6S)-5,6,7,8-tetrahydrofolate; that span reads GHL. Lys-229 is subject to N6-(pyridoxal phosphate)lysine.

Belongs to the SHMT family. Homodimer. Pyridoxal 5'-phosphate is required as a cofactor.

The protein localises to the cytoplasm. The enzyme catalyses (6R)-5,10-methylene-5,6,7,8-tetrahydrofolate + glycine + H2O = (6S)-5,6,7,8-tetrahydrofolate + L-serine. The protein operates within one-carbon metabolism; tetrahydrofolate interconversion. Its pathway is amino-acid biosynthesis; glycine biosynthesis; glycine from L-serine: step 1/1. Its function is as follows. Catalyzes the reversible interconversion of serine and glycine with tetrahydrofolate (THF) serving as the one-carbon carrier. This reaction serves as the major source of one-carbon groups required for the biosynthesis of purines, thymidylate, methionine, and other important biomolecules. Also exhibits THF-independent aldolase activity toward beta-hydroxyamino acids, producing glycine and aldehydes, via a retro-aldol mechanism. This Herpetosiphon aurantiacus (strain ATCC 23779 / DSM 785 / 114-95) protein is Serine hydroxymethyltransferase.